A 126-amino-acid polypeptide reads, in one-letter code: Glycine cleavage system H protein (126 aa).

The 83-residue stretch at 22–104 (VATVGITEYA…YEKAWMVKIE (83 aa)) folds into the Lipoyl-binding domain. At lysine 63 the chain carries N6-lipoyllysine.

This sequence belongs to the GcvH family. As to quaternary structure, the glycine cleavage system is composed of four proteins: P, T, L and H. The cofactor is (R)-lipoate.

The glycine cleavage system catalyzes the degradation of glycine. The H protein shuttles the methylamine group of glycine from the P protein to the T protein. In terms of biological role, is also involved in protein lipoylation via its role as an octanoyl/lipoyl carrier protein intermediate. The protein is Glycine cleavage system H protein of Staphylococcus epidermidis (strain ATCC 12228 / FDA PCI 1200).